Here is a 1020-residue protein sequence, read N- to C-terminus: Carbamoyl phosphate synthase arginine-specific large chain (1020 aa).

Residues 1–401 (MPKNNAIHSI…ATLKAIASLE (401 aa)) form a carboxyphosphate synthetic domain region. The ATP site is built by Arg-129, Arg-169, Gly-175, Gly-176, Gln-208, Ile-210, Glu-215, Gly-241, Ile-242, His-243, Gln-284, and Glu-298. The ATP-grasp 1 domain maps to 133–327 (KTLMKRLHQP…IAKIAADIAI (195 aa)). Gln-284, Glu-298, and Asn-300 together coordinate Mg(2+). Gln-284, Glu-298, and Asn-300 together coordinate Mn(2+). Oligomerization domain stretches follow at residues 402–542 (IDPK…FGQT) and 402–544 (IDPK…QTNE). 2 carbamoyl phosphate synthetic domain regions span residues 543–927 (NESH…ADSY) and 544–927 (ESHP…ADSY). One can recognise an ATP-grasp 2 domain in the interval 669–858 (ADCLRLLKIA…LAQLATRLIL (190 aa)). The ATP site is built by Arg-705, Gln-744, Leu-746, Glu-750, Gly-775, Val-776, His-777, Ser-778, and Gln-818. Gln-818 and Asn-831 together coordinate Mg(2+). Positions 818 and 831 each coordinate Mn(2+). An MGS-like domain is found at 927–1020 (YHLETWQTVD…LAVTPTPATI (94 aa)). Residues 928 to 1020 (HLETWQTVDG…LAVTPTPATI (93 aa)) form an allosteric domain region.

Belongs to the CarB family. In terms of assembly, composed of two chains; the small (or glutamine) chain promotes the hydrolysis of glutamine to ammonia, which is used by the large (or ammonia) chain to synthesize carbamoyl phosphate. Tetramer of heterodimers (alpha,beta)4. Mg(2+) is required as a cofactor. Mn(2+) serves as cofactor.

The enzyme catalyses hydrogencarbonate + L-glutamine + 2 ATP + H2O = carbamoyl phosphate + L-glutamate + 2 ADP + phosphate + 2 H(+). It catalyses the reaction hydrogencarbonate + NH4(+) + 2 ATP = carbamoyl phosphate + 2 ADP + phosphate + 2 H(+). It functions in the pathway amino-acid biosynthesis; L-arginine biosynthesis; carbamoyl phosphate from bicarbonate: step 1/1. Large subunit of the glutamine-dependent carbamoyl phosphate synthetase (CPSase). CPSase catalyzes the formation of carbamoyl phosphate from the ammonia moiety of glutamine, carbonate, and phosphate donated by ATP, constituting the first step of the biosynthetic pathway leading to arginine and/or urea. The large subunit (synthetase) binds the substrates ammonia (free or transferred from glutamine from the small subunit), hydrogencarbonate and ATP and carries out an ATP-coupled ligase reaction, activating hydrogencarbonate by forming carboxy phosphate which reacts with ammonia to form carbamoyl phosphate. This is Carbamoyl phosphate synthase arginine-specific large chain from Lactiplantibacillus plantarum (strain ATCC BAA-793 / NCIMB 8826 / WCFS1) (Lactobacillus plantarum).